The sequence spans 195 residues: Phosphoheptose isomerase (195 aa).

The SIS domain maps to 36–195 (LAHCLLSDGK…DLVDHQLFGE (160 aa)). 51-53 (NGG) is a substrate binding site. Zn(2+) contacts are provided by histidine 60 and glutamate 64. Substrate-binding positions include glutamate 64, 93 to 94 (ND), 119 to 121 (STS), serine 124, and glutamine 174. Zn(2+)-binding residues include glutamine 174 and histidine 182.

It belongs to the SIS family. GmhA subfamily. As to quaternary structure, homotetramer. The cofactor is Zn(2+).

It is found in the cytoplasm. The catalysed reaction is 2 D-sedoheptulose 7-phosphate = D-glycero-alpha-D-manno-heptose 7-phosphate + D-glycero-beta-D-manno-heptose 7-phosphate. It functions in the pathway carbohydrate biosynthesis; D-glycero-D-manno-heptose 7-phosphate biosynthesis; D-glycero-alpha-D-manno-heptose 7-phosphate and D-glycero-beta-D-manno-heptose 7-phosphate from sedoheptulose 7-phosphate: step 1/1. Catalyzes the isomerization of sedoheptulose 7-phosphate in D-glycero-D-manno-heptose 7-phosphate. In Methylococcus capsulatus (strain ATCC 33009 / NCIMB 11132 / Bath), this protein is Phosphoheptose isomerase.